The primary structure comprises 152 residues: Endoribonuclease YbeY (152 aa).

Residues histidine 113, histidine 117, and histidine 123 each coordinate Zn(2+).

Belongs to the endoribonuclease YbeY family. Requires Zn(2+) as cofactor.

The protein localises to the cytoplasm. Functionally, single strand-specific metallo-endoribonuclease involved in late-stage 70S ribosome quality control and in maturation of the 3' terminus of the 16S rRNA. This Wolbachia pipientis subsp. Culex pipiens (strain wPip) protein is Endoribonuclease YbeY.